The chain runs to 591 residues: Aspartate--tRNA ligase (591 aa).

Residue Glu-173 coordinates L-aspartate. The segment at 197-200 (QLFK) is aspartate. Arg-219 lines the L-aspartate pocket. ATP-binding positions include 219 to 221 (RDE) and Gln-228. Position 448 (His-448) interacts with L-aspartate. Glu-482 is an ATP binding site. L-aspartate is bound at residue Arg-489. 534 to 537 (GLDR) serves as a coordination point for ATP.

This sequence belongs to the class-II aminoacyl-tRNA synthetase family. Type 1 subfamily. Homodimer.

The protein resides in the cytoplasm. It catalyses the reaction tRNA(Asp) + L-aspartate + ATP = L-aspartyl-tRNA(Asp) + AMP + diphosphate. Catalyzes the attachment of L-aspartate to tRNA(Asp) in a two-step reaction: L-aspartate is first activated by ATP to form Asp-AMP and then transferred to the acceptor end of tRNA(Asp). In Shewanella oneidensis (strain ATCC 700550 / JCM 31522 / CIP 106686 / LMG 19005 / NCIMB 14063 / MR-1), this protein is Aspartate--tRNA ligase.